Consider the following 406-residue polypeptide: Elongation factor Tu, chloroplastic (406 aa).

In terms of domain architecture, tr-type G spans 8–210; that stretch reads KTHINIATIG…LLDSYIPKPK (203 aa). Residues 17 to 24, 77 to 81, and 132 to 135 contribute to the GTP site; these read GHFNHGKT, DCPGH, and NKED. A Mg(2+)-binding site is contributed by Thr24.

This sequence belongs to the TRAFAC class translation factor GTPase superfamily. Classic translation factor GTPase family. EF-Tu/EF-1A subfamily. Monomer.

It is found in the plastid. The protein localises to the chloroplast. It carries out the reaction GTP + H2O = GDP + phosphate + H(+). In terms of biological role, GTP hydrolase that promotes the GTP-dependent binding of aminoacyl-tRNA to the A-site of ribosomes during protein biosynthesis. The sequence is that of Elongation factor Tu, chloroplastic (tufA) from Chaetosphaeridium globosum (Charophycean green alga).